We begin with the raw amino-acid sequence, 907 residues long: Lipoxygenase 1, chloroplastic (907 aa).

A chloroplast-targeting transit peptide spans 1-49; sequence MALAKQIMGASLMDQKTSVFGSNLCLNHVLVNKHRLRLRKTRKNGSMVV. The PLAT domain maps to 85–209; the sequence is DFFKDTIFRK…DLPNPRIFFT (125 aa). The Lipoxygenase domain occupies 212–907; sequence PYLPDETPVG…CRGVPNSISI (696 aa). His-567, His-572, His-758, Asn-762, and Ile-907 together coordinate Fe cation.

This sequence belongs to the lipoxygenase family. Fe cation is required as a cofactor. As to expression, confined to glandular trichomes in flowers, and, at low levels, in leaves.

Its subcellular location is the plastid. The protein resides in the chloroplast. It catalyses the reaction (9Z,12Z,15Z)-octadecatrienoate + O2 = 13-hydroperoxy-(9Z,11E,15Z)-octadecatrienoate. The protein operates within lipid metabolism; oxylipin biosynthesis. Its pathway is isoprenoid biosynthesis. Functionally, component of the monoterpenoid pyrethrins biosynthesis; pyrethrins are widely used plant-derived pesticide. Plant lipoxygenases may be involved in a number of diverse aspects of plant physiology including growth and development, pest resistance, and senescence or responses to wounding. Catalyzes the hydroperoxidation of lipids containing a cis,cis-1,4-pentadiene structure. Mediates the peroxidation of linolenic acid leading to the production of 13-hydroperoxylinolenic acid. The chain is Lipoxygenase 1, chloroplastic from Tanacetum cinerariifolium (Dalmatian daisy).